Consider the following 258-residue polypeptide: Imidazole glycerol phosphate synthase subunit HisF (258 aa).

Active-site residues include D11 and D130.

Belongs to the HisA/HisF family. In terms of assembly, heterodimer of HisH and HisF.

It localises to the cytoplasm. It carries out the reaction 5-[(5-phospho-1-deoxy-D-ribulos-1-ylimino)methylamino]-1-(5-phospho-beta-D-ribosyl)imidazole-4-carboxamide + L-glutamine = D-erythro-1-(imidazol-4-yl)glycerol 3-phosphate + 5-amino-1-(5-phospho-beta-D-ribosyl)imidazole-4-carboxamide + L-glutamate + H(+). It participates in amino-acid biosynthesis; L-histidine biosynthesis; L-histidine from 5-phospho-alpha-D-ribose 1-diphosphate: step 5/9. Functionally, IGPS catalyzes the conversion of PRFAR and glutamine to IGP, AICAR and glutamate. The HisF subunit catalyzes the cyclization activity that produces IGP and AICAR from PRFAR using the ammonia provided by the HisH subunit. The chain is Imidazole glycerol phosphate synthase subunit HisF from Yersinia enterocolitica serotype O:8 / biotype 1B (strain NCTC 13174 / 8081).